The sequence spans 115 residues: NADH-ubiquinone oxidoreductase chain 3 (115 aa).

3 consecutive transmembrane segments (helical) span residues 4–24 (LTALSVNIALSTCLIAIAFWL), 55–75 (FFLVAITFLLFDLEIALLLPL), and 87–107 (MMLTAFILVSVLALGLAYEWM).

It belongs to the complex I subunit 3 family. As to quaternary structure, core subunit of respiratory chain NADH dehydrogenase (Complex I) which is composed of 45 different subunits. Interacts with TMEM186. Interacts with TMEM242.

The protein localises to the mitochondrion inner membrane. It catalyses the reaction a ubiquinone + NADH + 5 H(+)(in) = a ubiquinol + NAD(+) + 4 H(+)(out). In terms of biological role, core subunit of the mitochondrial membrane respiratory chain NADH dehydrogenase (Complex I) which catalyzes electron transfer from NADH through the respiratory chain, using ubiquinone as an electron acceptor. Essential for the catalytic activity of complex I. The polypeptide is NADH-ubiquinone oxidoreductase chain 3 (Peromyscus boylii (Brush deermouse)).